The sequence spans 308 residues: Protoheme IX farnesyltransferase (308 aa).

A run of 8 helical transmembrane segments spans residues 31 to 51, 53 to 73, 102 to 122, 124 to 144, 149 to 169, 170 to 190, 240 to 260, and 288 to 308; these read VIEL…RGTV, PLLI…ANAL, NALV…WWTT, LLSG…YTLL, TSQN…IGWS, AVTG…FFWT, LALA…VWFL, and YLAV…PHLF.

This sequence belongs to the UbiA prenyltransferase family. Protoheme IX farnesyltransferase subfamily.

It localises to the cell membrane. The enzyme catalyses heme b + (2E,6E)-farnesyl diphosphate + H2O = Fe(II)-heme o + diphosphate. Its pathway is porphyrin-containing compound metabolism; heme O biosynthesis; heme O from protoheme: step 1/1. Converts heme B (protoheme IX) to heme O by substitution of the vinyl group on carbon 2 of heme B porphyrin ring with a hydroxyethyl farnesyl side group. This chain is Protoheme IX farnesyltransferase, found in Mycolicibacterium paratuberculosis (strain ATCC BAA-968 / K-10) (Mycobacterium paratuberculosis).